Here is a 210-residue protein sequence, read N- to C-terminus: Putative transmembrane protein DDB_G0267530 (210 aa).

The tract at residues 1-40 (MGVEDQPQTQPQTQPQQQPQMGYQPQMGYQPQAQMGYQPQ) is disordered. 2 helical membrane passes run 119 to 139 (VIVF…FFFI) and 148 to 168 (TFGI…VIVV).

Its subcellular location is the membrane. This chain is Putative transmembrane protein DDB_G0267530, found in Dictyostelium discoideum (Social amoeba).